The following is a 432-amino-acid chain: uncharacterized protein (432 aa).

SIS domains follow at residues 105–244 and 277–422; these read WLTE…DLVS and CDKK…VDLP.

This is an uncharacterized protein from Saccharomyces cerevisiae (strain ATCC 204508 / S288c) (Baker's yeast).